A 141-amino-acid chain; its full sequence is MAKKAMAYIKLQIPAGKANPSPPVGPALGQHGVNIMEFCKGFNARTQSMGDTIVPVVITVYQDRSFSFITKTPPAAVLLMKAANITKGSSNPKSERVAEISKEKIREIAEIKMPDLNAYDIDAAMLIIEGTARSAGITVVE.

The protein belongs to the universal ribosomal protein uL11 family. As to quaternary structure, part of the ribosomal stalk of the 50S ribosomal subunit. Interacts with L10 and the large rRNA to form the base of the stalk. L10 forms an elongated spine to which L12 dimers bind in a sequential fashion forming a multimeric L10(L12)X complex. In terms of processing, one or more lysine residues are methylated.

Forms part of the ribosomal stalk which helps the ribosome interact with GTP-bound translation factors. The protein is Large ribosomal subunit protein uL11 of Desulfotalea psychrophila (strain LSv54 / DSM 12343).